Consider the following 874-residue polypeptide: Bifunctional apolipoprotein N-acyltransferase/polyprenol monophosphomannose synthase (874 aa).

The segment at 1–593 (MKLGAWVAAQ…GRHRATSRSY (593 aa)) is apolipoprotein N-acyltransferase. Helical transmembrane passes span 23–42 (TRLVVSIVAGLLLYASFPPR), 72–89 (YGLLFGLVFYVSLLPWIG), 94–115 (PGPWLALATTCALFPGIFGLFA), 177–194 (VALVGCGLTAIALEIEKW), and 206–223 (AVVLPAACICLVLFAAIV). The 257-residue stretch at 241-497 (VTVAVVQGNV…PAYLDSQVRL (257 aa)) folds into the CN hydrolase domain. The active-site Proton acceptor is glutamate 294. The active site involves lysine 359. Cysteine 409 functions as the Nucleophile in the catalytic mechanism. The chain crosses the membrane as a helical span at residues 509–526 (PILQWILVGAAAAVVLVA). Disordered regions lie at residues 533–609 (FPRP…NRPS) and 852–874 (RARPDIARPGAGGSRVSRADVTE). A polyprenol monophosphomannose synthase region spans residues 594–874 (MTTGQPAPPA…SRVSRADVTE (281 aa)).

It in the N-terminal section; belongs to the CN hydrolase family. Apolipoprotein N-acyltransferase subfamily. The protein in the C-terminal section; belongs to the glycosyltransferase 2 family.

It is found in the cell membrane. It catalyses the reaction N-terminal S-1,2-diacyl-sn-glyceryl-L-cysteinyl-[lipoprotein] + a glycerophospholipid = N-acyl-S-1,2-diacyl-sn-glyceryl-L-cysteinyl-[lipoprotein] + a 2-acyl-sn-glycero-3-phospholipid + H(+). The enzyme catalyses a di-trans,poly-cis-dolichyl phosphate + GDP-alpha-D-mannose = a di-trans,poly-cis-dolichyl beta-D-mannosyl phosphate + GDP. It functions in the pathway protein modification; lipoprotein biosynthesis (N-acyl transfer). Functionally, catalyzes the phospholipid dependent N-acylation of the N-terminal cysteine of apolipoprotein, the last step in lipoprotein maturation. Transfers mannose from GDP-mannose to lipid acceptors to form polyprenol monophosphomannose (PPM). PMM is an alkai-stable sugar donor which adds mannose-phosphate residues to triacylated-phosphatidyl-myo-inositol mannosides (PIM2), eventually leading to generation of the cell wall glycolipid lipoglycan modulins lipoarabinomannan (LAM) and lipomannan (LM). This chain is Bifunctional apolipoprotein N-acyltransferase/polyprenol monophosphomannose synthase, found in Mycobacterium bovis (strain BCG / Pasteur 1173P2).